A 300-amino-acid chain; its full sequence is Aspartate carbamoyltransferase catalytic subunit (300 aa).

The carbamoyl phosphate site is built by Arg-54 and Thr-55. Lys-82 is an L-aspartate binding site. Residues Arg-104, His-131, and Gln-134 each coordinate carbamoyl phosphate. L-aspartate-binding residues include Arg-164 and Arg-213. Residues Ala-256 and Pro-257 each coordinate carbamoyl phosphate.

The protein belongs to the aspartate/ornithine carbamoyltransferase superfamily. ATCase family. Heterododecamer (2C3:3R2) of six catalytic PyrB chains organized as two trimers (C3), and six regulatory PyrI chains organized as three dimers (R2).

The enzyme catalyses carbamoyl phosphate + L-aspartate = N-carbamoyl-L-aspartate + phosphate + H(+). It participates in pyrimidine metabolism; UMP biosynthesis via de novo pathway; (S)-dihydroorotate from bicarbonate: step 2/3. Functionally, catalyzes the condensation of carbamoyl phosphate and aspartate to form carbamoyl aspartate and inorganic phosphate, the committed step in the de novo pyrimidine nucleotide biosynthesis pathway. The polypeptide is Aspartate carbamoyltransferase catalytic subunit (Malacoplasma penetrans (strain HF-2) (Mycoplasma penetrans)).